A 162-amino-acid polypeptide reads, in one-letter code: Caveolin-2 (162 aa).

Topologically, residues 1-86 (MGLETEKADV…FEMSKYVIYK (86 aa)) are cytoplasmic. Tyr19 carries the phosphotyrosine; by SRC modification. A phosphoserine mark is found at Ser20 and Ser23. Position 27 is a phosphotyrosine; by SRC (Tyr27). The helical intramembrane region spans 87–107 (FLTVFLAIPLAFAAGILFATL). The Cytoplasmic segment spans residues 108-162 (SCLHIWIIMPFVKTCLMVLPSVQTIWKSVTDVVIAPLCTSIGRSFSSVSLQLSHD).

Belongs to the caveolin family. In terms of assembly, monomer or homodimer. Interacts with CAV1; the interaction forms a stable heterooligomeric complex that is required for targeting to lipid rafts and for caveolae formation. Tyrosine phosphorylated forms do not form heterooligomers with the Tyr-19-phosphorylated form existing as a monomer or dimer, and the Tyr-27-form as a monomer only. Interacts (tyrosine phosphorylated form) with the SH2 domain-containing proteins, RASA1, NCK1 and SRC. Interacts (tyrosine phosphorylated form) with INSR, the interaction (Tyr-27-phosphorylated form) is increased on insulin stimulation. Interacts (Tyr-19 phosphorylated form) with MAPK1 (phosphorylated form); the interaction, promoted by insulin, leads to nuclear location and MAPK1 activation. Interacts with STAT3; the interaction is increased on insulin-induced tyrosine phosphorylation leading to STAT activation. Phosphorylated on serine and tyrosine residues. CAV1 promotes phosphorylation on Ser-23 which then targets the complex to the plasma membrane, lipid rafts and caveolae. Phosphorylation on both Tyr-19 and Tyr-27 is required for insulin-induced 'Ser-727' phosphorylation of STAT3 and its activation. Phosphorylation on Tyr-19 is required for insulin-induced phosphorylation of MAPK1 and DNA binding of STAT3. Tyrosine phosphorylation is induced by both EGF and insulin. In terms of tissue distribution, expressed in aortic endothelial cells.

It localises to the nucleus. The protein localises to the cytoplasm. The protein resides in the golgi apparatus membrane. It is found in the cell membrane. Its subcellular location is the membrane. It localises to the caveola. Functionally, may act as a scaffolding protein within caveolar membranes. Interacts directly with G-protein alpha subunits and can functionally regulate their activity. Acts as an accessory protein in conjunction with CAV1 in targeting to lipid rafts and driving caveolae formation. Positive regulator of cellular mitogenesis of the MAPK signaling pathway. Required for the insulin-stimulated nuclear translocation and activation of MAPK1 and STAT3, and the subsequent regulation of cell cycle progression. The polypeptide is Caveolin-2 (CAV2) (Bos taurus (Bovine)).